A 376-amino-acid chain; its full sequence is Cyclic GMP-AMP synthase-like receptor 1 (376 aa).

Residues E77 and D79 each contribute to the Mg(2+) site.

Belongs to the mab-21 family. Requires Mg(2+) as cofactor. The cofactor is Mn(2+).

The catalysed reaction is UTP + ATP = 3',3'-cUAMP + 2 diphosphate. Functionally, nucleotidyltransferase that catalyzes the formation of cyclic UMP-AMP (3',3'-cUAMP) from ATP and UTP and plays a key role in innate immunity. Acts as a key sensor of double-stranded RNA (dsRNA), the presence of dsRNA in the cytoplasm being a danger signal that triggers the immune responses. Directly binds dsRNA, activating the nucleotidyltransferase activity, leading to synthesis of 3',3'-cUAMP, a second messenger that binds to and activates Sting, thereby triggering the immune response via activation of the NF-kappa-B transcription factor. The protein is Cyclic GMP-AMP synthase-like receptor 1 of Stylophora pistillata (Smooth cauliflower coral).